The chain runs to 336 residues: N-acetylornithine carbamoyltransferase (336 aa).

Residues 49 to 52, W77, and R112 each bind carbamoyl phosphate; that span reads SMRT. Position 144 (E144) interacts with N(2)-acetyl-L-ornithine. Residue 148–151 coordinates carbamoyl phosphate; it reads HPCQ. The N(2)-acetyl-L-ornithine site is built by K252 and L295. Residue 294-295 participates in carbamoyl phosphate binding; it reads CL. The residue at position 302 (K302) is an N6-carboxylysine. R322 contacts carbamoyl phosphate.

The protein belongs to the aspartate/ornithine carbamoyltransferase superfamily. AOTCase family. Homotrimer.

It localises to the cytoplasm. The enzyme catalyses N(2)-acetyl-L-ornithine + carbamoyl phosphate = N(2)-acetyl-L-citrulline + phosphate + H(+). The protein operates within amino-acid biosynthesis; L-arginine biosynthesis. With respect to regulation, carboxylation at Lys-302 increases the catalytic activity of the enzyme. Its function is as follows. Catalyzes the transfer of the carbamoyl group from carbamoyl phosphate to the delta-amino group of N(2)-acetyl-L-ornithine to produce N(2)-acetyl-L-citrulline. This is a step in an alternative arginine biosynthesis pathway. The enzyme has no activity with ornithine. The sequence is that of N-acetylornithine carbamoyltransferase from Xylella fastidiosa (strain Temecula1 / ATCC 700964).